Consider the following 875-residue polypeptide: Ectonucleotide pyrophosphatase/phosphodiesterase family member 3 (875 aa).

Residues 1-11 are Cytoplasmic-facing; the sequence is MDSRLALATEE. Residues 12-30 form a helical; Signal-anchor for type II membrane protein membrane-spanning segment; sequence PIKKDSLKRYKILCAVLLA. Topologically, residues 31–875 are extracellular; sequence LLVIVSLGLG…TYLPTFETII (845 aa). 2 consecutive SMB domains span residues 51–94 and 95–139; these read HIGS…VKST and QIWT…GEVP. 10 disulfides stabilise this stretch: Cys-55-Cys-72, Cys-59-Cys-90, Cys-70-Cys-83, Cys-76-Cys-82, Cys-99-Cys-116, Cys-104-Cys-134, Cys-114-Cys-127, Cys-120-Cys-126, Cys-145-Cys-191, and Cys-153-Cys-365. A Cell attachment site motif is present at residues 79–81; it reads RGD. Residues 161-545 form a phosphodiesterase region; it reads PVILFSMDGF…HGSLNHLLKA (385 aa). Zn(2+) is bound at residue Asp-168. Lys-205 serves as a coordination point for ATP. Thr-206 contacts Zn(2+). Residue Thr-206 is the Nucleophile of the active site. Asn-227 is a binding site for ATP. A glycan (N-linked (GlcNAc...) asparagine) is linked at Asn-237. Asp-276 provides a ligand contact to ATP. Residues Asn-280 and Asn-289 are each glycosylated (N-linked (GlcNAc...) asparagine). Tyr-290 lines the ATP pocket. Residues Asp-326, His-330, Asp-373, and His-374 each contribute to the Zn(2+) site. Cystine bridges form between Cys-381–Cys-478, Cys-429–Cys-818, Cys-562–Cys-623, Cys-575–Cys-679, Cys-577–Cys-664, and Cys-787–Cys-797. His-483 serves as a coordination point for Zn(2+). 4 N-linked (GlcNAc...) asparagine glycosylation sites follow: Asn-533, Asn-574, Asn-594, and Asn-702. The interval 582 to 875 is nuclease; it reads TSGQEEQVNQ…TYLPTFETII (294 aa). Residues Asp-752, Asn-754, Asp-756, His-758, and Asp-760 each coordinate Ca(2+). Asn-789 carries N-linked (GlcNAc...) asparagine glycosylation.

It belongs to the nucleotide pyrophosphatase/phosphodiesterase family. As to quaternary structure, monomer and homodimer. Requires Zn(2+) as cofactor. The N-terminal is blocked. In terms of processing, N-glycosylated. N-glycosylation is necessary for normal transport to the cell membrane, but is not the apical targeting signal. As to expression, detected in intestinal epithelium and liver (at protein level).

Its subcellular location is the cell membrane. The protein resides in the apical cell membrane. It is found in the secreted. The catalysed reaction is Hydrolytically removes 5'-nucleotides successively from the 3'-hydroxy termini of 3'-hydroxy-terminated oligonucleotides.. It carries out the reaction a ribonucleoside 5'-triphosphate + H2O = a ribonucleoside 5'-phosphate + diphosphate + H(+). The enzyme catalyses ATP + H2O = AMP + diphosphate + H(+). It catalyses the reaction CTP + H2O = CMP + diphosphate + H(+). The catalysed reaction is GTP + H2O = GMP + diphosphate + H(+). It carries out the reaction UTP + H2O = UMP + diphosphate + H(+). The enzyme catalyses UDP-N-acetyl-alpha-D-glucosamine + H2O = N-acetyl-alpha-D-glucosamine 1-phosphate + UMP + 2 H(+). It catalyses the reaction P(1),P(3)-bis(5'-adenosyl) triphosphate + H2O = AMP + ADP + 2 H(+). The catalysed reaction is P(1),P(4)-bis(5'-adenosyl) tetraphosphate + H2O = AMP + ATP + 2 H(+). It carries out the reaction P(1),P(5)-bis(5'-adenosyl) pentaphosphate + H2O = adenosine 5'-tetraphosphate + AMP + 2 H(+). The enzyme catalyses P(1),P(4)-bis(5'-guanosyl) tetraphosphate + H2O = GMP + GTP + 2 H(+). In terms of biological role, hydrolase that metabolizes extracellular nucleotides, including ATP, GTP, UTP and CTP. Limits mast cells and basophils response during inflammation and during the chronic phases of allergic responses by eliminating extracellular ATP, a signaling molecule activating these cells in an autocrine manner. Metabolizes extracellular ATP in the lumen of the small intestine, and thereby prevents ATP-induced apoptosis of intestinal plasmacytoid dendritic cells. Has a broad specificity and can also hydrolyze UDP-GlcNAc into UMP and GlcNAc-1-phosphate and potentially several other intracellular nucleotide sugars, including UDP-GalNAc, CMP-NeuAc, GDP-Fuc, and UDP-GlcA. Thereby, could modulate glycan biosynthesis and protein glycosylation. Can hydrolyze extracellular dinucleoside polyphosphates, including the vasoactive adenosine polyphosphates as well. In addition, displays an alkaline phosphodiesterase activity in vitro. This Rattus norvegicus (Rat) protein is Ectonucleotide pyrophosphatase/phosphodiesterase family member 3.